The following is a 308-amino-acid chain: Porphobilinogen deaminase (308 aa).

Cys-243 bears the S-(dipyrrolylmethanemethyl)cysteine mark.

This sequence belongs to the HMBS family. In terms of assembly, monomer. Dipyrromethane serves as cofactor.

The catalysed reaction is 4 porphobilinogen + H2O = hydroxymethylbilane + 4 NH4(+). It participates in porphyrin-containing compound metabolism; protoporphyrin-IX biosynthesis; coproporphyrinogen-III from 5-aminolevulinate: step 2/4. Its function is as follows. Tetrapolymerization of the monopyrrole PBG into the hydroxymethylbilane pre-uroporphyrinogen in several discrete steps. This chain is Porphobilinogen deaminase, found in Mesorhizobium japonicum (strain LMG 29417 / CECT 9101 / MAFF 303099) (Mesorhizobium loti (strain MAFF 303099)).